A 331-amino-acid polypeptide reads, in one-letter code: Mucin-15 (331 aa).

The N-terminal stretch at 1 to 22 (MLTLAKIALISSLFISLPFARP) is a signal peptide. The Extracellular portion of the chain corresponds to 23 to 233 (QKQNPRRNVT…SDTPKENKNT (211 aa)). Residues Asn-30, Asn-44, Asn-54, Asn-59, Asn-75, Asn-84, Asn-120, Asn-136, Asn-145, Asn-152, Asn-215, and Asn-222 are each glycosylated (N-linked (GlcNAc...) asparagine). Residues 124-162 (ADANPLQVSEHSNSTNSPSPENFTWSLDNDTMNSPEDIS) are compositionally biased toward polar residues. The disordered stretch occupies residues 124 to 186 (ADANPLQVSE…VTPFTAEPTE (63 aa)). A helical membrane pass occupies residues 234–254 (GIVFGAILGAILGASLLSLVG). Residues 255–331 (YLLCGQRKTD…DAIPPLRPSI (77 aa)) lie on the Cytoplasmic side of the membrane. Positions 302–331 (AVSDSSMPEGGESLQDGIPMDAIPPLRPSI) are disordered.

Post-translationally, highly glycosylated (N- and O-linked carbohydrates).

It is found in the membrane. This Mus musculus (Mouse) protein is Mucin-15 (Muc15).